Consider the following 185-residue polypeptide: ATP-dependent protease subunit HslV (185 aa).

Residue T12 is part of the active site. Residues S168, C171, and T174 each coordinate Na(+).

This sequence belongs to the peptidase T1B family. HslV subfamily. In terms of assembly, a double ring-shaped homohexamer of HslV is capped on each side by a ring-shaped HslU homohexamer. The assembly of the HslU/HslV complex is dependent on binding of ATP.

It localises to the cytoplasm. It catalyses the reaction ATP-dependent cleavage of peptide bonds with broad specificity.. Its activity is regulated as follows. Allosterically activated by HslU binding. In terms of biological role, protease subunit of a proteasome-like degradation complex believed to be a general protein degrading machinery. This chain is ATP-dependent protease subunit HslV, found in Jannaschia sp. (strain CCS1).